A 211-amino-acid chain; its full sequence is Transcription antitermination protein NusB (211 aa).

It belongs to the NusB family.

Involved in transcription antitermination. Required for transcription of ribosomal RNA (rRNA) genes. Binds specifically to the boxA antiterminator sequence of the ribosomal RNA (rrn) operons. This is Transcription antitermination protein NusB from Gloeobacter violaceus (strain ATCC 29082 / PCC 7421).